Consider the following 217-residue polypeptide: Glutathione S-transferase U20 (217 aa).

Positions 3–82 constitute a GST N-terminal domain; it reads NLPILLDYWP…YVDEAWPEKN (80 aa). Glutathione is bound by residues S13, I54, and S67. The region spanning 88 to 208 is the GST C-terminal domain; sequence DPYGRAQARF…LPDSEKIVAY (121 aa).

The protein belongs to the GST superfamily. Tau family. As to quaternary structure, homodimerization. Interacts with JAR1/FIN219 under continuous far red (cFR) light to stimulate JAR1/FIN219 activity and substrate selectivity. In terms of tissue distribution, mostly associated with vascular tissues, especially near hydathodes.

It localises to the nucleus. It is found in the cytoplasm. The protein resides in the cytosol. The enzyme catalyses RX + glutathione = an S-substituted glutathione + a halide anion + H(+). Its activity is regulated as follows. Activated by JAR1/FIN219. Functionally, exhibits glutathione-dependent thiol transferase activities. Can use glutathione (GSH) and 1-chloro-2,4-dinitrobenzene (CDNB) as substrates. Involved in the regulation of far-red light influence on development. Regulator of the interplay between light and JA signaling by increasing JAR1/FIN219 efficiency. Maybe involved in gravitropic signal transduction. The polypeptide is Glutathione S-transferase U20 (Arabidopsis thaliana (Mouse-ear cress)).